Reading from the N-terminus, the 204-residue chain is uncharacterized protein (204 aa).

This is an uncharacterized protein from Rickettsia prowazekii (strain Madrid E).